The sequence spans 730 residues: Meiotically up-regulated gene 70 protein (730 aa).

The tract at residues 1 to 27 (MTVGTLSVVSSTASDTASHVSDTRKRQ) is disordered. Residues 7–20 (SVVSSTASDTASHV) show a composition bias toward low complexity. CBS domains lie at 69–127 (ALDP…LNAR), 135–200 (MSTS…RIAR), 263–319 (SSEE…GLDP), and 328–385 (MTPH…PEEE). 2 helical membrane passes run 290 to 310 (AVLVMDNGAVSGVFTAHDVVL) and 358 to 378 (VVDESDAIIGMLSLFHLATAI). The interval 420 to 517 (ENYDVNPPLP…ENGSNSFAAS (98 aa)) is disordered. Composition is skewed to polar residues over residues 458 to 470 (AWQNENLSSNNKP) and 480 to 515 (YNFSNNPPTAMSEQSFHPSVSQKPMDTPENGSNSFA). A PB1 domain is found at 572 to 649 (PSQFTIKYRS…ARRRGLPRLE (78 aa)). The helical transmembrane segment at 706–726 (PIYIGIVSSSIVILAVSMWYL) threads the bilayer.

Its subcellular location is the cytoplasm. The protein localises to the nucleus membrane. Its function is as follows. Has a role in meiosis. The polypeptide is Meiotically up-regulated gene 70 protein (mug70) (Schizosaccharomyces pombe (strain 972 / ATCC 24843) (Fission yeast)).